A 217-amino-acid chain; its full sequence is THAP domain-containing protein 2 (217 aa).

Residues 1 to 80 form a THAP-type zinc finger; it reads MPTNCAAAGC…LKMDAVPTIF (80 aa). An HCFC1-binding motif (HBM) motif is present at residues 122 to 125; that stretch reads EHSY.

The protein is THAP domain-containing protein 2 (Thap2) of Mus musculus (Mouse).